A 357-amino-acid chain; its full sequence is Membrane-bound lytic murein transglycosylase C (357 aa).

A signal peptide spans Met1–Ala15. The N-palmitoyl cysteine moiety is linked to residue Cys16. Cys16 carries S-diacylglycerol cysteine lipidation.

It belongs to the transglycosylase Slt family.

It localises to the cell outer membrane. The enzyme catalyses Exolytic cleavage of the (1-&gt;4)-beta-glycosidic linkage between N-acetylmuramic acid (MurNAc) and N-acetylglucosamine (GlcNAc) residues in peptidoglycan, from either the reducing or the non-reducing ends of the peptidoglycan chains, with concomitant formation of a 1,6-anhydrobond in the MurNAc residue.. In terms of biological role, murein-degrading enzyme. May play a role in recycling of muropeptides during cell elongation and/or cell division. The sequence is that of Membrane-bound lytic murein transglycosylase C from Haemophilus influenzae (strain PittGG).